The sequence spans 96 residues: Small ribosomal subunit protein bS6 (96 aa).

Belongs to the bacterial ribosomal protein bS6 family.

Functionally, binds together with bS18 to 16S ribosomal RNA. In Acidothermus cellulolyticus (strain ATCC 43068 / DSM 8971 / 11B), this protein is Small ribosomal subunit protein bS6.